The following is a 35-amino-acid chain: Photosystem II reaction center protein M (35 aa).

Residues 5–25 (ILAFIATALFILVPTAFLLII) form a helical membrane-spanning segment.

This sequence belongs to the PsbM family. In terms of assembly, PSII is composed of 1 copy each of membrane proteins PsbA, PsbB, PsbC, PsbD, PsbE, PsbF, PsbH, PsbI, PsbJ, PsbK, PsbL, PsbM, PsbT, PsbX, PsbY, PsbZ, Psb30/Ycf12, at least 3 peripheral proteins of the oxygen-evolving complex and a large number of cofactors. It forms dimeric complexes.

It localises to the plastid. It is found in the chloroplast thylakoid membrane. Its function is as follows. One of the components of the core complex of photosystem II (PSII). PSII is a light-driven water:plastoquinone oxidoreductase that uses light energy to abstract electrons from H(2)O, generating O(2) and a proton gradient subsequently used for ATP formation. It consists of a core antenna complex that captures photons, and an electron transfer chain that converts photonic excitation into a charge separation. This subunit is found at the monomer-monomer interface. In Panax quinquefolius (American ginseng), this protein is Photosystem II reaction center protein M.